Reading from the N-terminus, the 393-residue chain is Histidinol dehydrogenase (393 aa).

NAD(+) is bound by residues Tyr112, Gln171, and Asn194. Thr217, Gln239, and His242 together coordinate substrate. Positions 239 and 242 each coordinate Zn(2+). Catalysis depends on proton acceptor residues Glu293 and His294. Substrate-binding residues include His294, Asp326, Glu379, and His384. Residue Asp326 coordinates Zn(2+). Position 384 (His384) interacts with Zn(2+).

This sequence belongs to the histidinol dehydrogenase family. Zn(2+) serves as cofactor.

It catalyses the reaction L-histidinol + 2 NAD(+) + H2O = L-histidine + 2 NADH + 3 H(+). The protein operates within amino-acid biosynthesis; L-histidine biosynthesis; L-histidine from 5-phospho-alpha-D-ribose 1-diphosphate: step 9/9. Catalyzes the sequential NAD-dependent oxidations of L-histidinol to L-histidinaldehyde and then to L-histidine. The chain is Histidinol dehydrogenase from Sulfolobus acidocaldarius (strain ATCC 33909 / DSM 639 / JCM 8929 / NBRC 15157 / NCIMB 11770).